The primary structure comprises 55 residues: Large ribosomal subunit protein eL40 (55 aa).

This sequence belongs to the eukaryotic ribosomal protein eL40 family.

The protein is Large ribosomal subunit protein eL40 of Ignicoccus hospitalis (strain KIN4/I / DSM 18386 / JCM 14125).